A 54-amino-acid polypeptide reads, in one-letter code: Large ribosomal subunit protein bL33A (54 aa).

This sequence belongs to the bacterial ribosomal protein bL33 family.

The protein is Large ribosomal subunit protein bL33A of Mycolicibacterium paratuberculosis (strain ATCC BAA-968 / K-10) (Mycobacterium paratuberculosis).